Consider the following 512-residue polypeptide: Kynurenine 3-monooxygenase (512 aa).

It belongs to the aromatic-ring hydroxylase family. KMO subfamily. It depends on FAD as a cofactor.

It is found in the mitochondrion outer membrane. The enzyme catalyses L-kynurenine + NADPH + O2 + H(+) = 3-hydroxy-L-kynurenine + NADP(+) + H2O. The protein operates within cofactor biosynthesis; NAD(+) biosynthesis; quinolinate from L-kynurenine: step 1/3. In terms of biological role, catalyzes the hydroxylation of L-kynurenine (L-Kyn) to form 3-hydroxy-L-kynurenine (L-3OHKyn). Required for synthesis of quinolinic acid. The polypeptide is Kynurenine 3-monooxygenase (bna4) (Aspergillus fumigatus (strain ATCC MYA-4609 / CBS 101355 / FGSC A1100 / Af293) (Neosartorya fumigata)).